The chain runs to 104 residues: U20-lycotoxin-Ls1d (104 aa).

An N-terminal signal peptide occupies residues 1-30 (MFSTSDQVSKMNSRILSALLILGIATCVIA). One can recognise a WAP domain in the interval 31-76 (GGFCPKSRHPQCNLSYKINDCCAQSDCRVGSVCCVEGCGNVCRAES). 5 cysteine pairs are disulfide-bonded: C34–C64, C42–C68, C51–C63, C52–C90, and C57–C72.

The protein belongs to the venom protein 11 family. 02 (wap-2) subfamily. Post-translationally, contains 5 disulfide bonds. Expressed by the venom gland.

The protein localises to the secreted. Its function is as follows. Has antibacterial activity. In Lycosa singoriensis (Wolf spider), this protein is U20-lycotoxin-Ls1d.